A 493-amino-acid polypeptide reads, in one-letter code: Cobyric acid synthase (493 aa).

The GATase cobBQ-type domain maps to 246–440 (PIDIAVIKMP…IHGVFDGVVF (195 aa)). Catalysis depends on C326, which acts as the Nucleophile. H432 is a catalytic residue.

This sequence belongs to the CobB/CobQ family. CobQ subfamily.

Its pathway is cofactor biosynthesis; adenosylcobalamin biosynthesis. Catalyzes amidations at positions B, D, E, and G on adenosylcobyrinic A,C-diamide. NH(2) groups are provided by glutamine, and one molecule of ATP is hydrogenolyzed for each amidation. The sequence is that of Cobyric acid synthase from Clostridium botulinum (strain Kyoto / Type A2).